A 125-amino-acid chain; its full sequence is Fluoride-specific ion channel FluC (125 aa).

Transmembrane regions (helical) follow at residues 1-21 (MIQA…RYYV), 32-52 (AFPW…GVFA), 68-88 (LLIT…LDAI), and 101-121 (IYIA…LAVM). Na(+) is bound by residues glycine 75 and threonine 78.

This sequence belongs to the fluoride channel Fluc/FEX (TC 1.A.43) family.

It is found in the cell inner membrane. The enzyme catalyses fluoride(in) = fluoride(out). Its activity is regulated as follows. Na(+) is not transported, but it plays an essential structural role and its presence is essential for fluoride channel function. In terms of biological role, fluoride-specific ion channel. Important for reducing fluoride concentration in the cell, thus reducing its toxicity. In Rhizobium johnstonii (strain DSM 114642 / LMG 32736 / 3841) (Rhizobium leguminosarum bv. viciae), this protein is Fluoride-specific ion channel FluC.